Here is a 404-residue protein sequence, read N- to C-terminus: Glucoside xylosyltransferase 1 (404 aa).

Residues 1 to 6 are Cytoplasmic-facing; it reads MRRYLR. A helical; Signal-anchor for type II membrane protein membrane pass occupies residues 7 to 29; that stretch reads VVGLCLACGFCSLLYAFSQLAVS. Residues 30-404 lie on the Lumenal side of the membrane; sequence LEEGAAGGRR…NRYDTPPKER (375 aa). The N-linked (GlcNAc...) asparagine glycan is linked to asparagine 201.

It belongs to the glycosyltransferase 8 family.

The protein resides in the membrane. It catalyses the reaction 3-O-(beta-D-glucosyl)-L-seryl-[EGF-like domain protein] + UDP-alpha-D-xylose = 3-O-[alpha-D-xylosyl-(1-&gt;3)-beta-D-glucosyl]-L-seryl-[EGF-like domain protein] + UDP + H(+). Glycosyltransferase which elongates the O-linked glucose attached to EGF-like repeats in the extracellular domain of Notch proteins by catalyzing the addition of xylose. The polypeptide is Glucoside xylosyltransferase 1 (Gxylt1) (Mus musculus (Mouse)).